The chain runs to 100 residues: Cell division topological specificity factor (100 aa).

Belongs to the MinE family.

Prevents the cell division inhibition by proteins MinC and MinD at internal division sites while permitting inhibition at polar sites. This ensures cell division at the proper site by restricting the formation of a division septum at the midpoint of the long axis of the cell. This chain is Cell division topological specificity factor, found in Synechococcus sp. (strain JA-2-3B'a(2-13)) (Cyanobacteria bacterium Yellowstone B-Prime).